We begin with the raw amino-acid sequence, 317 residues long: Lipase 1 (317 aa).

The first 18 residues, 1 to 18, serve as a signal peptide directing secretion; that stretch reads MLLKRLCFAALFSLSMVG. Cys-19 is lipidated: N-palmitoyl cysteine. Cys-19 carries S-diacylglycerol cysteine lipidation. The AB hydrolase-1 domain occupies 69–296; sequence PLLLIHGFGG…MEDVGHVPMV (228 aa). Residue His-74 is part of the active site. The active-site Nucleophile is Ser-142. Catalysis depends on charge relay system residues Glu-270 and His-292.

It localises to the cell outer membrane. It catalyses the reaction a triacylglycerol + H2O = a diacylglycerol + a fatty acid + H(+). This is Lipase 1 (lip1) from Psychrobacter immobilis.